A 252-amino-acid polypeptide reads, in one-letter code: Imidazole glycerol phosphate synthase subunit HisF (252 aa).

Catalysis depends on residues aspartate 11 and aspartate 130.

The protein belongs to the HisA/HisF family. In terms of assembly, heterodimer of HisH and HisF.

The protein localises to the cytoplasm. The enzyme catalyses 5-[(5-phospho-1-deoxy-D-ribulos-1-ylimino)methylamino]-1-(5-phospho-beta-D-ribosyl)imidazole-4-carboxamide + L-glutamine = D-erythro-1-(imidazol-4-yl)glycerol 3-phosphate + 5-amino-1-(5-phospho-beta-D-ribosyl)imidazole-4-carboxamide + L-glutamate + H(+). It participates in amino-acid biosynthesis; L-histidine biosynthesis; L-histidine from 5-phospho-alpha-D-ribose 1-diphosphate: step 5/9. IGPS catalyzes the conversion of PRFAR and glutamine to IGP, AICAR and glutamate. The HisF subunit catalyzes the cyclization activity that produces IGP and AICAR from PRFAR using the ammonia provided by the HisH subunit. This Bacillus licheniformis (strain ATCC 14580 / DSM 13 / JCM 2505 / CCUG 7422 / NBRC 12200 / NCIMB 9375 / NCTC 10341 / NRRL NRS-1264 / Gibson 46) protein is Imidazole glycerol phosphate synthase subunit HisF.